A 422-amino-acid polypeptide reads, in one-letter code: Dipeptidase aclJ (422 aa).

The helical transmembrane segment at 28–45 threads the bilayer; that stretch reads LAYSVTLTLVALFFTFAL. Zn(2+) contacts are provided by histidine 77 and aspartate 79. Residue asparagine 96 is glycosylated (N-linked (GlcNAc...) asparagine). A disulfide bridge links cysteine 128 with cysteine 219. Glutamate 190 contacts Zn(2+). Histidine 217 provides a ligand contact to substrate. N-linked (GlcNAc...) asparagine glycosylation is present at asparagine 270. Cysteine 287 and cysteine 319 are joined by a disulfide. Residues arginine 291 and aspartate 351 each coordinate substrate.

This sequence belongs to the metallo-dependent hydrolases superfamily. Peptidase M19 family. It depends on Zn(2+) as a cofactor.

The protein resides in the membrane. The catalysed reaction is an L-aminoacyl-L-amino acid + H2O = 2 an L-alpha-amino acid. It participates in mycotoxin biosynthesis. Its function is as follows. Dipeptidase; part of the gene cluster that mediates the biosynthesis of aspirochlorine (or antibiotic A30641), an unusual halogenated spiro compound with distinctive antifungal properties due to selective inhibition of protein biosynthesis, and which is also active against bacteria, viruses, and murine tumor cells. The non-ribosomal peptide synthetase (NRPS) aclP is responsible the formation of the diketopiperazine (DKP) core from the condensation of 2 phenylalanine residues. One Phe residue is tailored into chlorotyrosine by hydroxylation and chlorination, whereas the second Phe undergoes an unprecedented C-C bond cleavage to be converted into glycine. After formation of the DKP, sulfur is incorporated into the DKP by conjugation with glutathione by aclG, followed by its stepwise degradation to the thiol by aclI, aclJ and aclK, and the dithiol oxidation by aclT. In addition, oxygenases (aclB, aclC, aclL and aclO) and O-methyltransferases (aclM and aclU) act as tailoring enzymes to produce the intermediate dechloroaspirochlorine. Ultimately, chlorination of dechloroaspirochlorine by the halogenase aclH is the last step in the aspirochlorine pathway. This Aspergillus oryzae (strain ATCC 42149 / RIB 40) (Yellow koji mold) protein is Dipeptidase aclJ.